The primary structure comprises 282 residues: NADPH-dependent 7-cyano-7-deazaguanine reductase (282 aa).

88-90 contacts substrate; it reads IES. Position 90 to 91 (90 to 91) interacts with NADPH; it reads SK. Cysteine 190 acts as the Thioimide intermediate in catalysis. The active-site Proton donor is aspartate 197. 229–230 serves as a coordination point for substrate; the sequence is HE. Residue 258–259 coordinates NADPH; that stretch reads RG.

This sequence belongs to the GTP cyclohydrolase I family. QueF type 2 subfamily. As to quaternary structure, homodimer.

Its subcellular location is the cytoplasm. The catalysed reaction is 7-aminomethyl-7-carbaguanine + 2 NADP(+) = 7-cyano-7-deazaguanine + 2 NADPH + 3 H(+). Its pathway is tRNA modification; tRNA-queuosine biosynthesis. Its function is as follows. Catalyzes the NADPH-dependent reduction of 7-cyano-7-deazaguanine (preQ0) to 7-aminomethyl-7-deazaguanine (preQ1). The sequence is that of NADPH-dependent 7-cyano-7-deazaguanine reductase from Escherichia coli O81 (strain ED1a).